A 1220-amino-acid polypeptide reads, in one-letter code: DNA-directed RNA polymerase subunit beta (1220 aa).

This sequence belongs to the RNA polymerase beta chain family. As to quaternary structure, the RNAP catalytic core consists of 2 alpha, 1 beta, 1 beta' and 1 omega subunit. When a sigma factor is associated with the core the holoenzyme is formed, which can initiate transcription.

It carries out the reaction RNA(n) + a ribonucleoside 5'-triphosphate = RNA(n+1) + diphosphate. DNA-dependent RNA polymerase catalyzes the transcription of DNA into RNA using the four ribonucleoside triphosphates as substrates. This is DNA-directed RNA polymerase subunit beta from Mesomycoplasma hyopneumoniae (strain J / ATCC 25934 / NCTC 10110) (Mycoplasma hyopneumoniae).